We begin with the raw amino-acid sequence, 160 residues long: SsrA-binding protein (160 aa).

Residues 138–148 (KRDDIKDREWQ) are compositionally biased toward basic and acidic residues. The disordered stretch occupies residues 138-160 (KRDDIKDREWQTAKSRIMKHANR).

Belongs to the SmpB family.

It is found in the cytoplasm. Its function is as follows. Required for rescue of stalled ribosomes mediated by trans-translation. Binds to transfer-messenger RNA (tmRNA), required for stable association of tmRNA with ribosomes. tmRNA and SmpB together mimic tRNA shape, replacing the anticodon stem-loop with SmpB. tmRNA is encoded by the ssrA gene; the 2 termini fold to resemble tRNA(Ala) and it encodes a 'tag peptide', a short internal open reading frame. During trans-translation Ala-aminoacylated tmRNA acts like a tRNA, entering the A-site of stalled ribosomes, displacing the stalled mRNA. The ribosome then switches to translate the ORF on the tmRNA; the nascent peptide is terminated with the 'tag peptide' encoded by the tmRNA and targeted for degradation. The ribosome is freed to recommence translation, which seems to be the essential function of trans-translation. The protein is SsrA-binding protein of Serratia proteamaculans (strain 568).